A 101-amino-acid chain; its full sequence is Protein RnfH (101 aa).

This sequence belongs to the UPF0125 (RnfH) family.

The protein is Protein RnfH of Coxiella burnetii (strain CbuG_Q212) (Coxiella burnetii (strain Q212)).